The primary structure comprises 198 residues: Recombination protein RecR (198 aa).

The segment at 59-74 (CSLCCNYTDHDPCPIC) adopts a C4-type zinc-finger fold. The region spanning 82 to 175 (TLLCIVEQPR…KVTRIAHGLP (94 aa)) is the Toprim domain.

Belongs to the RecR family.

Functionally, may play a role in DNA repair. It seems to be involved in an RecBC-independent recombinational process of DNA repair. It may act with RecF and RecO. In Desulfitobacterium hafniense (strain DSM 10664 / DCB-2), this protein is Recombination protein RecR.